A 501-amino-acid chain; its full sequence is Myrosinase MA1 (501 aa).

3 cysteine pairs are disulfide-bonded: Cys6-Cys438, Cys14-Cys434, and Cys206-Cys214. Asn21 is a glycosylation site (N-linked (GlcNAc...) asparagine). Gln39 serves as a coordination point for substrate. Position 56 (His56) interacts with Zn(2+). The N-linked (GlcNAc...) asparagine glycan is linked to Asn60. Asp70 serves as a coordination point for Zn(2+). A glycan (N-linked (GlcNAc...) asparagine) is linked at Asn90. Residues His141 and Asn186 each coordinate substrate. Residue Gln187 participates in L-ascorbate binding. 2 N-linked (GlcNAc...) asparagine glycosylation sites follow: Asn218 and Asn244. Arg259 is an L-ascorbate binding site. Residues Asn265 and Asn292 are each glycosylated (N-linked (GlcNAc...) asparagine). Tyr330 contributes to the substrate binding site. N-linked (GlcNAc...) asparagine glycosylation is found at Asn343, Asn346, and Asn361. The active-site Nucleophile is Glu409. Substrate contacts are provided by residues Trp457 and 464–465 (EF). An N-linked (GlcNAc...) asparagine glycan is attached at Asn482.

It belongs to the glycosyl hydrolase 1 family. As to quaternary structure, homodimer. In vacuoles called myrosin grains of a certain class of cells, myrosin cells, distributed in the cotyledons and the axis of the embryo as well as in different organs of the growing plant.

It localises to the vacuole. It carries out the reaction a thioglucoside + H2O = a sugar + a thiol.. Functionally, degradation of glucosinolates (glucose residue linked by a thioglucoside bound to an amino acid derivative) to glucose, sulfate and any of the products: thiocyanates, isothiocyanates, nitriles, epithionitriles or oxazolidine-2-thiones. This chain is Myrosinase MA1, found in Sinapis alba (White mustard).